Consider the following 340-residue polypeptide: GTPase Obg (340 aa).

The region spanning 1–158 is the Obg domain; sequence MSFIDEAKVY…KYITLKLKII (158 aa). The OBG-type G domain occupies 159-325; it reads SDIGIIGLPN…LSTLIQYIHK (167 aa). GTP contacts are provided by residues 165-172, 190-194, 211-214, 278-281, and 306-308; these read GLPNAGKS, FTTLE, DIPG, NKSD, and SSI. Positions 172 and 192 each coordinate Mg(2+).

Belongs to the TRAFAC class OBG-HflX-like GTPase superfamily. OBG GTPase family. Monomer. It depends on Mg(2+) as a cofactor.

It is found in the cytoplasm. In terms of biological role, an essential GTPase which binds GTP, GDP and possibly (p)ppGpp with moderate affinity, with high nucleotide exchange rates and a fairly low GTP hydrolysis rate. Plays a role in control of the cell cycle, stress response, ribosome biogenesis and in those bacteria that undergo differentiation, in morphogenesis control. This is GTPase Obg from Ehrlichia chaffeensis (strain ATCC CRL-10679 / Arkansas).